The chain runs to 353 residues: Photosystem II D2 protein (353 aa).

Threonine 2 is modified (N-acetylthreonine). Threonine 2 is modified (phosphothreonine). Residues 41-61 (CAYFALGGWFTGTTFVTSWYT) traverse the membrane as a helical segment. Histidine 118 provides a ligand contact to chlorophyll a. A helical membrane pass occupies residues 125–141 (GFMLRQFELARSVQLRP). Positions 130 and 143 each coordinate pheophytin a. A helical membrane pass occupies residues 153–166 (VFVSVFLIYPLGQS). Chlorophyll a is bound at residue histidine 198. A helical transmembrane segment spans residues 208 to 228 (AALLCAIHGATVENTLFEDGD). Residues histidine 215 and phenylalanine 262 each coordinate a plastoquinone. Histidine 215 provides a ligand contact to Fe cation. Histidine 269 is a Fe cation binding site. Residues 279–295 (GLWMSALGVVGLALNLR) form a helical membrane-spanning segment.

Belongs to the reaction center PufL/M/PsbA/D family. In terms of assembly, PSII is composed of 1 copy each of membrane proteins PsbA, PsbB, PsbC, PsbD, PsbE, PsbF, PsbH, PsbI, PsbJ, PsbK, PsbL, PsbM, PsbT, PsbX, PsbY, PsbZ, Psb30/Ycf12, at least 3 peripheral proteins of the oxygen-evolving complex and a large number of cofactors. It forms dimeric complexes. The D1/D2 heterodimer binds P680, chlorophylls that are the primary electron donor of PSII, and subsequent electron acceptors. It shares a non-heme iron and each subunit binds pheophytin, quinone, additional chlorophylls, carotenoids and lipids. There is also a Cl(-1) ion associated with D1 and D2, which is required for oxygen evolution. The PSII complex binds additional chlorophylls, carotenoids and specific lipids. is required as a cofactor.

Its subcellular location is the plastid. It is found in the chloroplast thylakoid membrane. It carries out the reaction 2 a plastoquinone + 4 hnu + 2 H2O = 2 a plastoquinol + O2. Photosystem II (PSII) is a light-driven water:plastoquinone oxidoreductase that uses light energy to abstract electrons from H(2)O, generating O(2) and a proton gradient subsequently used for ATP formation. It consists of a core antenna complex that captures photons, and an electron transfer chain that converts photonic excitation into a charge separation. The D1/D2 (PsbA/PsbD) reaction center heterodimer binds P680, the primary electron donor of PSII as well as several subsequent electron acceptors. D2 is needed for assembly of a stable PSII complex. The chain is Photosystem II D2 protein from Nuphar advena (Common spatterdock).